Reading from the N-terminus, the 382-residue chain is Lipid-A-disaccharide synthase (382 aa).

This sequence belongs to the LpxB family.

The catalysed reaction is 2-N,3-O-bis[(3R)-3-hydroxytetradecanoyl]-alpha-D-glucosaminyl 1-phosphate + UDP-2-N,3-O-bis[(3R)-3-hydroxytetradecanoyl]-alpha-D-glucosamine = lipid A disaccharide (E. coli) + UDP + H(+). The enzyme catalyses a lipid X + a UDP-2-N,3-O-bis[(3R)-3-hydroxyacyl]-alpha-D-glucosamine = a lipid A disaccharide + UDP + H(+). It functions in the pathway glycolipid biosynthesis; lipid IV(A) biosynthesis; lipid IV(A) from (3R)-3-hydroxytetradecanoyl-[acyl-carrier-protein] and UDP-N-acetyl-alpha-D-glucosamine: step 5/6. Functionally, condensation of UDP-2,3-diacylglucosamine and 2,3-diacylglucosamine-1-phosphate to form lipid A disaccharide, a precursor of lipid A, a phosphorylated glycolipid that anchors the lipopolysaccharide to the outer membrane of the cell. This is Lipid-A-disaccharide synthase from Shigella flexneri.